The primary structure comprises 280 residues: Bifunctional protein FolD (280 aa).

Residues 166 to 168 and Ser191 each bind NADP(+); that span reads GRS.

It belongs to the tetrahydrofolate dehydrogenase/cyclohydrolase family. As to quaternary structure, homodimer.

The enzyme catalyses (6R)-5,10-methylene-5,6,7,8-tetrahydrofolate + NADP(+) = (6R)-5,10-methenyltetrahydrofolate + NADPH. It carries out the reaction (6R)-5,10-methenyltetrahydrofolate + H2O = (6R)-10-formyltetrahydrofolate + H(+). It functions in the pathway one-carbon metabolism; tetrahydrofolate interconversion. Functionally, catalyzes the oxidation of 5,10-methylenetetrahydrofolate to 5,10-methenyltetrahydrofolate and then the hydrolysis of 5,10-methenyltetrahydrofolate to 10-formyltetrahydrofolate. This chain is Bifunctional protein FolD, found in Cellvibrio japonicus (strain Ueda107) (Pseudomonas fluorescens subsp. cellulosa).